Reading from the N-terminus, the 494-residue chain is MKTIAFDSNKYLNLQRDHILERISQFDGKLYMEFGGKMLEDYHAARVLPGYEPDNKIKLLKELKEQVEIVIAINANNIEHSKARGDLGISYDQEVFRLIDKFNTLDIYVGSVVITQYNNQPAADAFRKQLEKNGIASYLHYPIKGYPTDINHIISSEGMGKNNYIKTSRNLIVVTAPGPGSGKLATCMSQMYHDQINGVKSGYAKFETFPVWNLPLHHPVNLAYEAATADLDDVNMIDPFHLETYGKTAVNYNRDIEVFPVLNRTFERILSKSPYASPTDMGVNMVGFSIVNEEAAIEASKQEIIRRYYQTLVDFKAERVTESAVKKIELLMNDIGVTPDDRHVTVAAHQKAEQTGQPALALQLPNGQIVTGKTSELFGPTAAVIINAIKTLAKIDKTTHLIEPEYVKPIQGLKVNHLGSHNPRLHSNEILIALAITAMTSEEANLAMKELGNLKGSEAHSTVILTEEDKNVLRKLGVNITFDPVYQHHKLYRK.

This sequence belongs to the UPF0371 family.

The protein is UPF0371 protein SPy_1343/M5005_Spy1095 of Streptococcus pyogenes serotype M1.